The sequence spans 40 residues: Photosystem II reaction center protein J (40 aa).

Residues 8–28 traverse the membrane as a helical segment; the sequence is IPLWLIGTVTGIAVIGLIGVF.

The protein belongs to the PsbJ family. PSII is composed of 1 copy each of membrane proteins PsbA, PsbB, PsbC, PsbD, PsbE, PsbF, PsbH, PsbI, PsbJ, PsbK, PsbL, PsbM, PsbT, PsbX, PsbY, PsbZ, Psb30/Ycf12, at least 3 peripheral proteins of the oxygen-evolving complex and a large number of cofactors. It forms dimeric complexes.

It is found in the plastid. The protein resides in the chloroplast thylakoid membrane. One of the components of the core complex of photosystem II (PSII). PSII is a light-driven water:plastoquinone oxidoreductase that uses light energy to abstract electrons from H(2)O, generating O(2) and a proton gradient subsequently used for ATP formation. It consists of a core antenna complex that captures photons, and an electron transfer chain that converts photonic excitation into a charge separation. This Oryza nivara (Indian wild rice) protein is Photosystem II reaction center protein J.